The primary structure comprises 846 residues: SLIT and NTRK-like protein 2 (846 aa).

The N-terminal stretch at 1 to 21 (MLSGVWFLSVLTVAGILQTES) is a signal peptide. Over 22–622 (RKTAKDICKI…LHTEVPLSVL (601 aa)) the chain is Extracellular. 2 disulfide bridges follow: Cys-29/Cys-35 and Cys-33/Cys-46. 6 LRR repeats span residues 63 to 84 (RIYQ…EFVN), 87 to 108 (NAVT…AFSG), 111 to 132 (TLKR…TFLG), 135 to 156 (SLEY…AFSK), 159 to 180 (KLKV…VFRF), and 182 to 203 (LLTH…GVLE). An N-linked (GlcNAc...) asparagine glycan is attached at Asn-84. Residues 167–215 (DNLLLSLPSNVFRFVLLTHLDLRGNRLKVMPFAGVLEHIGGIMEIQLEE) form a required for interaction with PTPRD region. Residues 216–265 (NPWNCTCDLLPLKAWLDTITVFVGEIVCETPFRLHGKDVTQLTRQDLCPR) form the LRRCT 1 domain. Asn-219 carries an N-linked (GlcNAc...) asparagine glycan. Intrachain disulfides connect Cys-220-Cys-243 and Cys-222-Cys-263. Residues 261 to 322 (DLCPRKSASG…TPRVTVSKDR (62 aa)) form a disordered region. 2 stretches are compositionally biased toward low complexity: residues 267 to 276 (SASGDSSQRS) and 285 to 300 (RLTP…TRAP). The region spanning 332 to 374 (QTKSPVALTCPSSCVCTSQSSDNGLNVNCQERKFTNISDLQPK) is the LRRNT domain. LRR repeat units follow at residues 377–398 (SPKK…DLLE), 401–422 (SLDL…AFTN), 425–446 (SLRR…MFDG), 449–470 (SLQY…TFDA), 473–494 (NLQL…IFGG), and 496–517 (ALTR…GVLD). Asn-422 carries an N-linked (GlcNAc...) asparagine glycan. In terms of domain architecture, LRRCT 2 spans 530 to 581 (NPWDCTCDIMGLKDWTEHANSPVIINEVTCESPAKHAGEILKFLGREAICPE). Residues 623-643 (ILGLLVVFILSVCFGAGLFVF) traverse the membrane as a helical segment. At 644-846 (VLKRRKGVPN…LEKQTAISQL (203 aa)) the chain is on the cytoplasmic side. Residue Tyr-757 is modified to Phosphotyrosine.

It belongs to the SLITRK family. As to quaternary structure, interacts with PTPRD; this interaction is PTPRD splicing-dependent and may induce pre-synaptic differentiation. Interacts with NTRK2. In the adult, significant expression is detected only in the brain. Broadly expressed in embryonic brain with highest expression in ventricular layer, subventricular zone, cortical plate, pyramidal layer of hippocampus, subicular neuroepithelium, thalamus, hypothalamus and spinal cord.

The protein resides in the membrane. The protein localises to the cell membrane. It localises to the cell projection. It is found in the dendrite. It is involved in synaptogenesis. Promotes excitatory synapse differentiation. Suppresses neurite outgrowth. Involved in the negative regulation of NTRK2. This chain is SLIT and NTRK-like protein 2 (Slitrk2), found in Mus musculus (Mouse).